The sequence spans 589 residues: ATP-dependent lipid A-core flippase (589 aa).

5 consecutive transmembrane segments (helical) span residues 29 to 49 (LLLV…TGFL), 70 to 90 (WLPV…YITD), 157 to 177 (VIGA…TILV), 261 to 281 (MIGA…ALAG), and 283 to 303 (LTAG…PGLK). The ABC transmembrane type-1 domain maps to 32-314 (VAALIAALIE…LTNVQNMVQR (283 aa)). In terms of domain architecture, ABC transporter spans 346 to 582 (IEFRDVTARY…GGLYSHLHGM (237 aa)). 380–387 (GRSGSGKS) lines the ATP pocket.

It belongs to the ABC transporter superfamily. Lipid exporter (TC 3.A.1.106) family. Homodimer.

It is found in the cell inner membrane. It carries out the reaction ATP + H2O + lipid A-core oligosaccharideSide 1 = ADP + phosphate + lipid A-core oligosaccharideSide 2.. Functionally, involved in lipopolysaccharide (LPS) biosynthesis. Translocates lipid A-core from the inner to the outer leaflet of the inner membrane. Transmembrane domains (TMD) form a pore in the inner membrane and the ATP-binding domain (NBD) is responsible for energy generation. The sequence is that of ATP-dependent lipid A-core flippase from Xanthomonas oryzae pv. oryzae (strain MAFF 311018).